Here is a 192-residue protein sequence, read N- to C-terminus: Lipid A acyltransferase PagP (192 aa).

An N-terminal signal peptide occupies residues 1–29 (MVVNVVIVAKKYFLFITLLIIQVSLPAHA). Catalysis depends on residues His64, Asp107, and Ser108.

It belongs to the lipid A palmitoyltransferase family. Homodimer.

It is found in the cell outer membrane. The enzyme catalyses a lipid A + a 1,2-diacyl-sn-glycero-3-phosphocholine = a hepta-acyl lipid A + a 2-acyl-sn-glycero-3-phosphocholine. It carries out the reaction a lipid IVA + a 1,2-diacyl-sn-glycero-3-phosphocholine = a lipid IVB + a 2-acyl-sn-glycero-3-phosphocholine. It catalyses the reaction a lipid IIA + a 1,2-diacyl-sn-glycero-3-phosphocholine = a lipid IIB + a 2-acyl-sn-glycero-3-phosphocholine. Its function is as follows. Transfers a fatty acid residue from the sn-1 position of a phospholipid to the N-linked hydroxyfatty acid chain on the proximal unit of lipid A or its precursors. This is Lipid A acyltransferase PagP from Citrobacter rodentium (strain ICC168) (Citrobacter freundii biotype 4280).